The chain runs to 329 residues: MAKAPMRVAVTGAAGQIGYSLLFRIANGDLLGKDQPVILQLLEIPDEKAQKALAGVMMELEDCAFPLLAGMTAHSDPMTAFKDIDVALLVGARPRGPGMERKDLLSANAQIFTAQGKALNVVAKKTVKVLVVGNPANTNAYIAMKSAPDIPAKNFTAMLRLDHNRALSQLANKLNKPVADIEKLVVWGNHSPTMYPDYRFATIDGKSVKDSINDAAWNKDVFIPTVGKRGAAIIEARGLSSAASAANAAIDHIHDWVLGTNGKWVTMGIPSKGEYDIPAEVIYGFPVVCENGEYKMIEGLEIDEFSRERMTHTLNELLEEQAGVKHLLS.

Residue 12-18 (GAAGQIG) coordinates NAD(+). Residues Arg-95 and Arg-101 each coordinate substrate. NAD(+) is bound by residues Asn-108, Gln-115, and 132 to 134 (VGN). Positions 134 and 165 each coordinate substrate. The Proton acceptor role is filled by His-190.

Belongs to the LDH/MDH superfamily. MDH type 2 family.

It carries out the reaction (S)-malate + NAD(+) = oxaloacetate + NADH + H(+). In terms of biological role, catalyzes the reversible oxidation of malate to oxaloacetate. The protein is Malate dehydrogenase of Polynucleobacter necessarius subsp. necessarius (strain STIR1).